Consider the following 445-residue polypeptide: Phosphoglucosamine mutase (445 aa).

The active-site Phosphoserine intermediate is the S102. Residues S102, D241, D243, and D245 each contribute to the Mg(2+) site. Residue S102 is modified to Phosphoserine.

This sequence belongs to the phosphohexose mutase family. Mg(2+) serves as cofactor. Activated by phosphorylation.

The catalysed reaction is alpha-D-glucosamine 1-phosphate = D-glucosamine 6-phosphate. Functionally, catalyzes the conversion of glucosamine-6-phosphate to glucosamine-1-phosphate. This chain is Phosphoglucosamine mutase, found in Shewanella piezotolerans (strain WP3 / JCM 13877).